Reading from the N-terminus, the 199-residue chain is Peptidyl-tRNA hydrolase (199 aa).

A tRNA-binding site is contributed by tyrosine 15. Catalysis depends on histidine 20, which acts as the Proton acceptor. Residues tyrosine 66, asparagine 68, and asparagine 114 each coordinate tRNA.

It belongs to the PTH family. In terms of assembly, monomer.

It localises to the cytoplasm. The catalysed reaction is an N-acyl-L-alpha-aminoacyl-tRNA + H2O = an N-acyl-L-amino acid + a tRNA + H(+). Functionally, hydrolyzes ribosome-free peptidyl-tRNAs (with 1 or more amino acids incorporated), which drop off the ribosome during protein synthesis, or as a result of ribosome stalling. Catalyzes the release of premature peptidyl moieties from peptidyl-tRNA molecules trapped in stalled 50S ribosomal subunits, and thus maintains levels of free tRNAs and 50S ribosomes. The chain is Peptidyl-tRNA hydrolase from Burkholderia cenocepacia (strain HI2424).